A 331-amino-acid chain; its full sequence is 6-phosphogluconolactonase (331 aa).

Position 287 is an N6-acetyllysine (K287).

It belongs to the cycloisomerase 2 family.

The enzyme catalyses 6-phospho-D-glucono-1,5-lactone + H2O = 6-phospho-D-gluconate + H(+). It participates in carbohydrate degradation; pentose phosphate pathway; D-ribulose 5-phosphate from D-glucose 6-phosphate (oxidative stage): step 2/3. Its function is as follows. Catalyzes the hydrolysis of 6-phosphogluconolactone to 6-phosphogluconate. The sequence is that of 6-phosphogluconolactonase from Escherichia coli O7:K1 (strain IAI39 / ExPEC).